The chain runs to 250 residues: Adenosylcobinamide-GDP ribazoletransferase (250 aa).

Helical transmembrane passes span 33 to 53, 63 to 83, 109 to 129, 137 to 157, 180 to 200, and 203 to 223; these read IASYFPIVGIVIGGILSLLYI, IVMTFIVAFSYVLTGAMHIDG, LGTNGVLAAIFIVVLKILFLT, LTALLITPIIGRLSIVFSMMI, FAIAFVISIATSYFILPLAVF, and ILTISLFVTYIVSKYISLRIG.

The protein belongs to the CobS family. Requires Mg(2+) as cofactor.

It localises to the cell membrane. The enzyme catalyses alpha-ribazole + adenosylcob(III)inamide-GDP = adenosylcob(III)alamin + GMP + H(+). It carries out the reaction alpha-ribazole 5'-phosphate + adenosylcob(III)inamide-GDP = adenosylcob(III)alamin 5'-phosphate + GMP + H(+). It participates in cofactor biosynthesis; adenosylcobalamin biosynthesis; adenosylcobalamin from cob(II)yrinate a,c-diamide: step 7/7. Joins adenosylcobinamide-GDP and alpha-ribazole to generate adenosylcobalamin (Ado-cobalamin). Also synthesizes adenosylcobalamin 5'-phosphate from adenosylcobinamide-GDP and alpha-ribazole 5'-phosphate. The polypeptide is Adenosylcobinamide-GDP ribazoletransferase (Thermoanaerobacter pseudethanolicus (strain ATCC 33223 / 39E) (Clostridium thermohydrosulfuricum)).